The primary structure comprises 64 residues: Alpha-like toxin Lqh6 (64 aa).

Residues 2–63 (RDGYIAQPEN…GIIVDGVKCH (62 aa)) enclose the LCN-type CS-alpha/beta domain. Cystine bridges form between Cys-12/Cys-62, Cys-16/Cys-34, Cys-20/Cys-44, and Cys-24/Cys-46. Lys-64 carries the lysine amide modification.

The protein belongs to the long (4 C-C) scorpion toxin superfamily. Sodium channel inhibitor family. Alpha subfamily. Expressed by the venom gland.

It localises to the secreted. Alpha toxins bind voltage-independently at site-3 of sodium channels (Nav) and inhibit the inactivation of the activated channels, thereby blocking neuronal transmission. This toxin is highly toxic to insects and mice, and inhibits the binding of alpha-toxin to cockroach neuronal membranes. The chain is Alpha-like toxin Lqh6 from Leiurus hebraeus (Hebrew deathstalker scorpion).